Consider the following 91-residue polypeptide: MKLSNVFLAAVVILTCVCVFQITAVPFIQQVQDEHHVESEELQENQHLTEAEHRLTDPLVLFRTKRQSHLSLCRFCCKCCRNKGCGYCCKF.

An N-terminal signal peptide occupies residues 1-24 (MKLSNVFLAAVVILTCVCVFQITA). A propeptide spanning residues 25 to 64 (VPFIQQVQDEHHVESEELQENQHLTEAEHRLTDPLVLFRT) is cleaved from the precursor. Disulfide bonds link Cys73/Cys89, Cys76/Cys79, Cys77/Cys85, and Cys80/Cys88.

It belongs to the hepcidin family.

The protein resides in the secreted. Its function is as follows. Seems to act as a signaling molecule involved in the maintenance of iron homeostasis. Seems to be required in conjunction with HFE to regulate both intestinal iron absorption and iron storage in macrophages. May also have antimicrobial activity. The sequence is that of Hepcidin-2 (hamp2) from Danio rerio (Zebrafish).